The chain runs to 306 residues: Nucleotide-binding protein amb4396 (306 aa).

A compositionally biased stretch (polar residues) spans Met1–Ala14. The interval Met1–Gly20 is disordered. ATP is bound at residue Gly29–Thr36. Position 77 to 80 (Asp77 to Thr80) interacts with GTP.

It belongs to the RapZ-like family.

Functionally, displays ATPase and GTPase activities. The chain is Nucleotide-binding protein amb4396 from Paramagnetospirillum magneticum (strain ATCC 700264 / AMB-1) (Magnetospirillum magneticum).